The following is a 170-amino-acid chain: UPF0690 protein C1orf52 homolog (170 aa).

2 disordered regions span residues 1–56 and 124–170; these read MAAE…PDEL and SNVY…KRKV. Residues 46-56 show a composition bias toward basic and acidic residues; it reads DTKKLPGPDEL. A compositionally biased stretch (acidic residues) spans 144–159; that stretch reads EEEEAREDSPPSDDEQ.

It belongs to the UPF0690 family.

The sequence is that of UPF0690 protein C1orf52 homolog from Xenopus tropicalis (Western clawed frog).